Reading from the N-terminus, the 207-residue chain is Protein YABBY 6 (207 aa).

The C4-type zinc-finger motif lies at 16-43 (CNFCNTILAVSVPGNSMLNIVTVRCGHC).

It belongs to the YABBY family. As to expression, expressed in leaf blades, leaf sheaths and flowers.

The protein resides in the nucleus. This is Protein YABBY 6 (YAB6) from Oryza sativa subsp. japonica (Rice).